The following is a 56-amino-acid chain: Large ribosomal subunit protein bL33 (56 aa).

Belongs to the bacterial ribosomal protein bL33 family.

This chain is Large ribosomal subunit protein bL33, found in Ehrlichia ruminantium (strain Gardel).